The chain runs to 198 residues: Recombination protein RecR (198 aa).

Residues 57 to 72 form a C4-type zinc finger; the sequence is CSVCGRLTDDDPCIIC. The region spanning 80-175 is the Toprim domain; sequence TKILVVEDSK…KVTRLARGLA (96 aa).

The protein belongs to the RecR family.

In terms of biological role, may play a role in DNA repair. It seems to be involved in an RecBC-independent recombinational process of DNA repair. It may act with RecF and RecO. In Streptococcus thermophilus (strain CNRZ 1066), this protein is Recombination protein RecR.